A 969-amino-acid chain; its full sequence is RNA polymerase-associated protein RapA (969 aa).

Positions 164–334 (EVGRRHAPRV…FARLRLLDPD (171 aa)) constitute a Helicase ATP-binding domain. 177–184 (DEVGLGKT) lines the ATP pocket. The short motif at 280-283 (DEAH) is the DEAH box element. One can recognise a Helicase C-terminal domain in the interval 492 to 686 (RVNWLLEKVK…ELKSQLEQGR (195 aa)).

This sequence belongs to the SNF2/RAD54 helicase family. RapA subfamily. In terms of assembly, interacts with the RNAP. Has a higher affinity for the core RNAP than for the holoenzyme. Its ATPase activity is stimulated by binding to RNAP.

In terms of biological role, transcription regulator that activates transcription by stimulating RNA polymerase (RNAP) recycling in case of stress conditions such as supercoiled DNA or high salt concentrations. Probably acts by releasing the RNAP, when it is trapped or immobilized on tightly supercoiled DNA. Does not activate transcription on linear DNA. Probably not involved in DNA repair. This is RNA polymerase-associated protein RapA from Vibrio parahaemolyticus serotype O3:K6 (strain RIMD 2210633).